Here is a 443-residue protein sequence, read N- to C-terminus: Putative transporter AmpG 1 (443 aa).

Helical transmembrane passes span 6 to 26 (HVCI…MITG), 43 to 63 (IGIL…APVF), 74 to 96 (ILGH…TSIL), 106 to 128 (VLLS…ILSA), 144 to 164 (GIYI…AIYL), 172 to 192 (KIYQ…ILVS), 255 to 275 (DISL…YRLP), 300 to 320 (VCKF…GIIM), 326 to 346 (LYSI…FILL), 355 to 375 (ILFI…TAYI), 394 to 414 (LSSM…YMVV), and 416 to 436 (FGWQ…LLIL).

It belongs to the major facilitator superfamily.

The protein resides in the cell inner membrane. The chain is Putative transporter AmpG 1 (ampG1) from Rickettsia typhi (strain ATCC VR-144 / Wilmington).